Consider the following 188-residue polypeptide: Peptidyl-tRNA hydrolase (188 aa).

Position 14 (F14) interacts with tRNA. Catalysis depends on H19, which acts as the Proton acceptor. The tRNA site is built by Y64, N66, and N112.

It belongs to the PTH family. As to quaternary structure, monomer.

The protein localises to the cytoplasm. It carries out the reaction an N-acyl-L-alpha-aminoacyl-tRNA + H2O = an N-acyl-L-amino acid + a tRNA + H(+). Functionally, hydrolyzes ribosome-free peptidyl-tRNAs (with 1 or more amino acids incorporated), which drop off the ribosome during protein synthesis, or as a result of ribosome stalling. Catalyzes the release of premature peptidyl moieties from peptidyl-tRNA molecules trapped in stalled 50S ribosomal subunits, and thus maintains levels of free tRNAs and 50S ribosomes. In Aster yellows witches'-broom phytoplasma (strain AYWB), this protein is Peptidyl-tRNA hydrolase.